The chain runs to 152 residues: Ribonuclease H (152 aa).

An RNase H type-1 domain is found at 1 to 142 (MNSKVVIYTD…ADKLAVQGRE (142 aa)). Mg(2+) contacts are provided by Asp-10, Glu-48, Asp-70, and Asp-134.

Belongs to the RNase H family. As to quaternary structure, monomer. Requires Mg(2+) as cofactor.

Its subcellular location is the cytoplasm. It catalyses the reaction Endonucleolytic cleavage to 5'-phosphomonoester.. Functionally, endonuclease that specifically degrades the RNA of RNA-DNA hybrids. This chain is Ribonuclease H, found in Rickettsia akari (strain Hartford).